Reading from the N-terminus, the 527-residue chain is Dual specificity protein kinase shkA (527 aa).

The Protein kinase domain occupies 45–304 (ITTESILGDG…GIVSELEEII (260 aa)). ATP is bound by residues 51 to 59 (LGDGSFGTV) and lysine 72. Residue aspartate 167 is the Proton acceptor of the active site. Residues 424–513 (WFHGDISTSE…INTPCLGSRF (90 aa)) form the SH2 domain.

It belongs to the protein kinase superfamily. TKL Ser/Thr protein kinase family. SH2 domain-containing protein kinase subfamily.

The protein resides in the membrane. It catalyses the reaction L-seryl-[protein] + ATP = O-phospho-L-seryl-[protein] + ADP + H(+). The catalysed reaction is L-threonyl-[protein] + ATP = O-phospho-L-threonyl-[protein] + ADP + H(+). In terms of biological role, required for proper chemotaxis and phagocytosis; proper spatiotemporal control of F-actin levels in chemotaxing cells. Negative regulator of the PI3K (phosphatidylinositol 3 kinase) pathway. Predominantly phosphorylates serines and threonines and tyrosines at a lower level. The chain is Dual specificity protein kinase shkA (shkA) from Dictyostelium discoideum (Social amoeba).